We begin with the raw amino-acid sequence, 152 residues long: FMN reductase (NADH) RutF (152 aa).

This sequence belongs to the non-flavoprotein flavin reductase family. RutF subfamily.

It carries out the reaction FMNH2 + NAD(+) = FMN + NADH + 2 H(+). Its function is as follows. Catalyzes the reduction of FMN to FMNH2 which is used to reduce pyrimidine by RutA via the Rut pathway. The chain is FMN reductase (NADH) RutF from Shigella dysenteriae serotype 1 (strain Sd197).